A 345-amino-acid polypeptide reads, in one-letter code: Gibberellin receptor GID1A (345 aa).

N-acetylalanine is present on A2. Residues 113–115 (HGG) carry the Involved in the stabilization of the negatively charged intermediate by the formation of the oxyanion hole motif. Gibberellin A4 is bound by residues 115 to 116 (GS), Y127, and S191. The gibberellin A3 site is built by S116, Y127, S191, and F238. The active site involves S191. Residue D289 is part of the active site. G320 is a binding site for gibberellin A4. G320 is a gibberellin A3 binding site.

The protein belongs to the 'GDXG' lipolytic enzyme family. Interacts (via N-terminus) with the DELLA proteins GAI, RGA, RGL1, RGL2 and RGL3 (via N-terminus) in a GA-dependent manner. In terms of tissue distribution, widely expressed.

The protein localises to the nucleus. Functions as a soluble gibberellin (GA) receptor. GA is an essential hormone that regulates growth and development in plants. Binds with high affinity the biologically active gibberellin GA4, but has no affinity for the biologically inactive GAs. In response to GA, interacts with specific DELLA proteins, known as repressors of GA-induced growth, and targets them for degradation via proteasome. Seems to be required for GA signaling that controls root growth, seed germination, stem elongation and flower development. Partially redundant with GID1B and GID1C. This chain is Gibberellin receptor GID1A (GID1A), found in Arabidopsis thaliana (Mouse-ear cress).